A 170-amino-acid chain; its full sequence is Putative pre-16S rRNA nuclease (170 aa).

Positions 1 to 18 are enriched in basic and acidic residues; sequence MGTDDRLPDRPGADDPGR. The disordered stretch occupies residues 1–22; sequence MGTDDRLPDRPGADDPGRGRRI.

This sequence belongs to the YqgF nuclease family.

It is found in the cytoplasm. Functionally, could be a nuclease involved in processing of the 5'-end of pre-16S rRNA. This is Putative pre-16S rRNA nuclease from Mycolicibacterium smegmatis (strain ATCC 700084 / mc(2)155) (Mycobacterium smegmatis).